A 469-amino-acid polypeptide reads, in one-letter code: Glutamine synthetase (469 aa).

The GS beta-grasp domain occupies 12-97 (HDVKWVDLRF…LVCDIIEPST (86 aa)). One can recognise a GS catalytic domain in the interval 105 to 469 (PRNIAKRAEE…PLEYDLYYSV (365 aa)). Mg(2+) is bound by residues Glu130 and Glu132. Glu208 is a binding site for ATP. 2 residues coordinate Mg(2+): Glu213 and Glu221. L-glutamate contacts are provided by residues 265–266 (NG) and Gly266. Residue His270 coordinates Mg(2+). ATP-binding positions include 272–274 (HMS) and Ser274. Positions 322, 328, and 340 each coordinate L-glutamate. ATP contacts are provided by Arg340, Arg345, and Lys353. Position 358 (Glu358) interacts with Mg(2+). L-glutamate is bound at residue Arg360. The residue at position 398 (Tyr398) is an O-AMP-tyrosine.

Belongs to the glutamine synthetase family. As to quaternary structure, oligomer of 12 subunits arranged in the form of two hexameric ring. It depends on Mg(2+) as a cofactor.

Its subcellular location is the cytoplasm. The enzyme catalyses L-glutamate + NH4(+) + ATP = L-glutamine + ADP + phosphate + H(+). Its activity is regulated as follows. The activity of this enzyme could be controlled by adenylation under conditions of abundant glutamine. Catalyzes the ATP-dependent biosynthesis of glutamine from glutamate and ammonia. In Pseudomonas aeruginosa (strain ATCC 15692 / DSM 22644 / CIP 104116 / JCM 14847 / LMG 12228 / 1C / PRS 101 / PAO1), this protein is Glutamine synthetase.